The following is a 219-amino-acid chain: Small ribosomal subunit protein uS3 (219 aa).

Residues 39-107 (LRKFLKKKLH…EVLIDIQEVR (69 aa)) form the KH type-2 domain.

Belongs to the universal ribosomal protein uS3 family. Part of the 30S ribosomal subunit. Forms a tight complex with proteins S10 and S14.

In terms of biological role, binds the lower part of the 30S subunit head. Binds mRNA in the 70S ribosome, positioning it for translation. The chain is Small ribosomal subunit protein uS3 from Desulfatibacillum aliphaticivorans.